Here is a 1913-residue protein sequence, read N- to C-terminus: GREB1-like protein (1913 aa).

The segment covering 86–96 (MEDDEDEEEMS) has biased composition (acidic residues). 4 disordered regions span residues 86-111 (MEDD…KPAP), 281-309 (NGTS…SPRP), 1097-1157 (EAER…TSSI), and 1179-1207 (DSLD…LAWS). Residues 289–301 (KSSSCSSTPSRPG) are compositionally biased toward low complexity. The span at 1118-1157 (PQSNSSAVTGTSGSIMENGVSSSSTAGKPQQQLLTPTSSI) shows a compositional bias: polar residues. A compositionally biased stretch (low complexity) spans 1187–1200 (SSTTSKPSSSSSSS). Residues 1832–1852 (GVFFSGLLLYLCDSFVGADLL) form a helical membrane-spanning segment.

Belongs to the GREB1 family. Expressed in the inner ear, with a high presence in the spiral ganglia, cochlear nerve bundles, and hair cells.

The protein localises to the membrane. In terms of biological role, plays a major role in early metanephros and genital development. This is GREB1-like protein (Greb1l) from Mus musculus (Mouse).